We begin with the raw amino-acid sequence, 794 residues long: MDFLELEAIEGLRWSWNSWPTTKSDCESLVVPLSIMYTPLMHFSELPTIPYDPLICSRCGAVLNPYARVDYQSRIWSCPFCFHKNLFPRSYSGITETNLPAELFPTYSAVEYSPLPSRQSGSNTTTPTAAASWSNGFNQGVRSMPSNSSFSSLASSTVGGGGGVISELGPAFVFVVDASMVEDELRAVRSDVLFVIEQLPENCLVALITFDSMVRVYDLGFSECSKVVVFHGERDLSPDQIQQFLGLGYSKQFHHGKMSAIRKQSFLLPLVECEFNLTSAFEEIIPLVDVKPGHRPHRSTGAAISTALGLLEGCSVTTGSRIMVFTSGPATRGPGIIVDSDLSNSIRTHRDIITGHVSYYDKSCGFYKKLAKRLCDSSVVLDVFACSLDQVGAAELRYAVEMSGGFLLLGETFESEQFKKCLRHIFIRDADGNLSMYFDVSLEVVTTKDMRICGALGPVVSLRQKNDIVSETEIGEGGTYMWKTSTVTNKTCVSFFFHVSNEQNRKPQPGSAFFIQFITRYRYGNGAMRKRVTTVARRWVAGKSPEISSSFDQETAASVMARLAINRAEECHARDVITWLDNGLIRFASRFGDYIQEDPSSFRLTPNFSLYPQFMFYLRRSQFLDVFNNSPDETGFFRLMLNREGVVNSIIMIQPTLLRYSFDGPPVPVLLDIRSVTPDVILLFDSYFYVVIHHGSKIAQWRKLEYHKDPSHETFRNLLEAPEIDAAQLVTDRIPMPRIVRCDQHGSQARFLLAKLNPSVTQKTDHTGGSDIVLTDDMSLQDFLEDLQSLAVKG.

Zn(2+) is bound by residues Cys-56, Cys-59, Cys-78, and Cys-81. A zinc finger-like region spans residues 56 to 81; that stretch reads CSRCGAVLNPYARVDYQSRIWSCPFC.

Belongs to the SEC23/SEC24 family. SEC23 subfamily. As to quaternary structure, component of the coat protein complex II (COPII), composed of at least five proteins: the Sec23/24 complex, the Sec13/31 complex and Sar1. Interacts with SEC24A.

It is found in the cytoplasmic vesicle. The protein resides in the COPII-coated vesicle membrane. Its subcellular location is the endoplasmic reticulum membrane. The protein localises to the membrane. Component of the coat protein complex II (COPII) which promotes the formation of transport vesicles from the endoplasmic reticulum (ER). The coat has two main functions, the physical deformation of the endoplasmic reticulum membrane into vesicles and the selection of cargo molecules. The polypeptide is Protein transport protein SEC23 G (Arabidopsis thaliana (Mouse-ear cress)).